The primary structure comprises 87 residues: MKQGIHPDYHKVVFMDSSTGFKFISGSTANSAETVEWEDGNTYPLIRVEISSDSHPFYTGKQKFTQADGRVDRFNKKYGFADKNAAK.

Belongs to the bacterial ribosomal protein bL31 family. Type B subfamily. In terms of assembly, part of the 50S ribosomal subunit.

This is Large ribosomal subunit protein bL31B from Latilactobacillus sakei subsp. sakei (strain 23K) (Lactobacillus sakei subsp. sakei).